Here is a 393-residue protein sequence, read N- to C-terminus: Protein TsgA (393 aa).

12 helical membrane passes run 11-31, 51-71, 78-98, 101-121, 134-154, 162-182, 206-226, 245-265, 273-293, 297-317, 332-352, and 361-381; these read WISF…GMVM, FLNA…EIVP, FGFL…SLAL, AAMF…TFLV, LLFT…IAAF, WYWV…LTFG, IGVL…LGFI, TLVS…SFIL, ILTV…TGTP, AWSI…IITL, FVLT…GPIV, and LLTA…LGFV.

Belongs to the major facilitator superfamily. TsgA family.

It is found in the cell inner membrane. The polypeptide is Protein TsgA (Escherichia coli O139:H28 (strain E24377A / ETEC)).